We begin with the raw amino-acid sequence, 834 residues long: DNA gyrase subunit A (834 aa).

The region spanning 53-520 (LPDVRDGLKP…NDTEIDEEDL (468 aa)) is the Topo IIA-type catalytic domain. The active-site O-(5'-phospho-DNA)-tyrosine intermediate is tyrosine 141. The GyrA-box motif lies at 547–553 (QGRGGVG).

It belongs to the type II topoisomerase GyrA/ParC subunit family. As to quaternary structure, heterotetramer, composed of two GyrA and two GyrB chains. In the heterotetramer, GyrA contains the active site tyrosine that forms a transient covalent intermediate with DNA, while GyrB binds cofactors and catalyzes ATP hydrolysis.

It localises to the cytoplasm. The enzyme catalyses ATP-dependent breakage, passage and rejoining of double-stranded DNA.. In terms of biological role, a type II topoisomerase that negatively supercoils closed circular double-stranded (ds) DNA in an ATP-dependent manner to modulate DNA topology and maintain chromosomes in an underwound state. Negative supercoiling favors strand separation, and DNA replication, transcription, recombination and repair, all of which involve strand separation. Also able to catalyze the interconversion of other topological isomers of dsDNA rings, including catenanes and knotted rings. Type II topoisomerases break and join 2 DNA strands simultaneously in an ATP-dependent manner. The protein is DNA gyrase subunit A of Brachyspira hyodysenteriae (strain ATCC 49526 / WA1).